Consider the following 414-residue polypeptide: 2,3-diketo-5-methylthiopentyl-1-phosphate enolase (414 aa).

Lys99 acts as the Proton acceptor in catalysis. Residues Lys148, Lys174–Glu177, His265, Gly338, and Gly360–Gly361 each bind substrate. Residues Lys174, Asp176, and Glu177 each contribute to the Mg(2+) site. Lys174 is modified (N6-carboxylysine).

Belongs to the RuBisCO large chain family. Type IV subfamily. As to quaternary structure, homodimer. Mg(2+) serves as cofactor.

The catalysed reaction is 5-methylsulfanyl-2,3-dioxopentyl phosphate = 2-hydroxy-5-methylsulfanyl-3-oxopent-1-enyl phosphate. The protein operates within amino-acid biosynthesis; L-methionine biosynthesis via salvage pathway; L-methionine from S-methyl-5-thio-alpha-D-ribose 1-phosphate: step 3/6. Functionally, catalyzes the enolization of 2,3-diketo-5-methylthiopentyl-1-phosphate (DK-MTP-1-P) into 2-hydroxy-3-keto-5-methylthiopentenyl-1-phosphate (HK-MTPenyl-1-P). The chain is 2,3-diketo-5-methylthiopentyl-1-phosphate enolase from Bacillus thuringiensis (strain Al Hakam).